Reading from the N-terminus, the 314-residue chain is MPFAAVDIQDDCGSPDVPQANPKRSKEEEEDRGDKNDHVKKRKKAKKDYQPNYFLSIPITNKKITTGIKVLQNSILQQDKRLTKAMVGDGSFHITLLVMQLLNEDEVNIGTDALLELKPFVEEILEGKHLALPFQGIGTFQGQVGFVKLADGDHVSALLEIAETAKRTFREKGILAGESRTFKPHLTFMKLSKAPMLRKKGVRKIEPGLYEQFIDHRFGEELLYQIDLCSMLKKKQSNGYYHCESSIVIGEKDRREPEDAELVRLSKRLVENAVLKAVQQYLEETQNKKQPGEGNSTKAEEGDRNGDGSDNNRK.

Residues Met-1 to Lys-46 are disordered. Positions Arg-24–Asp-37 are enriched in basic and acidic residues. Residues Thr-95 and His-185–Thr-187 each bind AMP. Residues Thr-95 and His-185–Thr-187 each bind CMP. Residues Ala-260 to Lys-314 form a PKA-RII-alpha subunit binding domain region. The tract at residues Glu-261–Thr-285 is RI-alpha-binding. Positions Leu-262–Leu-275 are RII-binding. The tract at residues Tyr-281–Lys-314 is disordered. Over residues Lys-298 to Lys-314 the composition is skewed to basic and acidic residues.

Binds cAMP-dependent protein kinase (PKA). Interacts with PRKCA; only the cytoplasmic form is capable of interacting with PRKCA. As to expression, expressed in oocytes.

The protein resides in the nucleus. It localises to the cytoplasm. Probably targets cAMP-dependent protein kinase (PKA) to the cellular membrane or cytoskeletal structures. The membrane-associated form reduces epithelial sodium channel (ENaC) activity, whereas the free cytoplasmic form may negatively regulate ENaC channel feedback inhibition by intracellular sodium. The sequence is that of A-kinase anchor protein 7 isoform gamma from Mus musculus (Mouse).